The following is a 480-amino-acid chain: Thiamine biosynthesis bifunctional protein ThiM/ThiE (480 aa).

The segment at 1–287 (MSTLPERVRE…LYVLVSGATP (287 aa)) is hydroxyethylthiazole kinase. Residue Met40 participates in 5-(2-hydroxyethyl)-4-methylthiazole binding. ATP-binding residues include Arg116 and Thr164. Gly191 is a binding site for 5-(2-hydroxyethyl)-4-methylthiazole. The thiamine-phosphate synthase stretch occupies residues 288–480 (PDVLEAVLQA…VRRAKGEVSA (193 aa)). Residues 303-307 (QFREK) and Asn335 contribute to the 4-amino-2-methyl-5-(diphosphooxymethyl)pyrimidine site. The Mg(2+) site is built by Asp336 and Asp355. 4-amino-2-methyl-5-(diphosphooxymethyl)pyrimidine is bound at residue Thr374. 400–402 (TPS) is a 2-[(2R,5Z)-2-carboxy-4-methylthiazol-5(2H)-ylidene]ethyl phosphate binding site. Lys403 provides a ligand contact to 4-amino-2-methyl-5-(diphosphooxymethyl)pyrimidine. 2-[(2R,5Z)-2-carboxy-4-methylthiazol-5(2H)-ylidene]ethyl phosphate-binding positions include Gly431 and 451–452 (IS).

The protein in the N-terminal section; belongs to the Thz kinase family. In the C-terminal section; belongs to the thiamine-phosphate synthase family. Mg(2+) is required as a cofactor.

It carries out the reaction 5-(2-hydroxyethyl)-4-methylthiazole + ATP = 4-methyl-5-(2-phosphooxyethyl)-thiazole + ADP + H(+). The catalysed reaction is 2-[(2R,5Z)-2-carboxy-4-methylthiazol-5(2H)-ylidene]ethyl phosphate + 4-amino-2-methyl-5-(diphosphooxymethyl)pyrimidine + 2 H(+) = thiamine phosphate + CO2 + diphosphate. The enzyme catalyses 2-(2-carboxy-4-methylthiazol-5-yl)ethyl phosphate + 4-amino-2-methyl-5-(diphosphooxymethyl)pyrimidine + 2 H(+) = thiamine phosphate + CO2 + diphosphate. It catalyses the reaction 4-methyl-5-(2-phosphooxyethyl)-thiazole + 4-amino-2-methyl-5-(diphosphooxymethyl)pyrimidine + H(+) = thiamine phosphate + diphosphate. It functions in the pathway cofactor biosynthesis; thiamine diphosphate biosynthesis; 4-methyl-5-(2-phosphoethyl)-thiazole from 5-(2-hydroxyethyl)-4-methylthiazole: step 1/1. It participates in cofactor biosynthesis; thiamine diphosphate biosynthesis; thiamine phosphate from 4-amino-2-methyl-5-diphosphomethylpyrimidine and 4-methyl-5-(2-phosphoethyl)-thiazole: step 1/1. Condenses 4-methyl-5-(beta-hydroxyethyl)thiazole monophosphate (THZ-P) and 2-methyl-4-amino-5-hydroxymethyl pyrimidine pyrophosphate (HMP-PP) to form thiamine monophosphate (TMP). The sequence is that of Thiamine biosynthesis bifunctional protein ThiM/ThiE (thiM/thiE) from Symbiobacterium thermophilum (strain DSM 24528 / JCM 14929 / IAM 14863 / T).